The following is a 154-amino-acid chain: Hexachlorocyclohexane dehydrochlorinase 1 (154 aa).

D25 is a catalytic residue. H73 serves as the catalytic Proton acceptor.

It belongs to the HCH dehydrochlorinase family. In terms of assembly, homotrimer.

Its subcellular location is the periplasm. It carries out the reaction gamma-hexachlorocyclohexane = (3R,4S,5S,6R)-pentachlorocyclohexene + chloride + H(+). The catalysed reaction is (3R,4S,5S,6R)-pentachlorocyclohexene = (3R,6R)-1,3,4,6-tetrachlorocyclohexa-1,4-diene + chloride + H(+). The protein operates within xenobiotic degradation; hexachlorocyclohexane degradation. Catalyzes the conversion of the important environmental pollutant gamma-hexachlorocyclohexane (gamma-HCH or lindane) to 1,3,4,6-tetrachloro-1,4-cyclohexadiene (1,4-TCDN) via gamma-pentachlorocyclohexene (gamma-PCCH). Proceeds by two successive 1,2-anti conformationally dependent dehydrochlorinations. Also shows activity with alpha- and delta-HCH, giving alpha- and delta-PCCH respectively, but not with the beta isomer. This chain is Hexachlorocyclohexane dehydrochlorinase 1, found in Sphingobium indicum (strain DSM 16412 / CCM 7286 / MTCC 6364 / B90A).